Here is a 292-residue protein sequence, read N- to C-terminus: Elongation factor Ts (292 aa).

An involved in Mg(2+) ion dislocation from EF-Tu region spans residues 79 to 82 (TDFV).

The protein belongs to the EF-Ts family.

It is found in the cytoplasm. Functionally, associates with the EF-Tu.GDP complex and induces the exchange of GDP to GTP. It remains bound to the aminoacyl-tRNA.EF-Tu.GTP complex up to the GTP hydrolysis stage on the ribosome. The chain is Elongation factor Ts from Xylella fastidiosa (strain 9a5c).